Here is a 570-residue protein sequence, read N- to C-terminus: Pleckstrin homology domain-containing family D member 1 (570 aa).

The segment covering 1 to 13 has biased composition (basic and acidic residues); it reads MTTKTTPKELKAK. The disordered stretch occupies residues 1 to 42; it reads MTTKTTPKELKAKKESKKKGSAPEPPKNGPPRTSPPNTIEKK. Positions 23–34 are enriched in pro residues; the sequence is PEPPKNGPPRTS. A PH domain is found at 83–192; it reads GVQNYGILMK…WLKALRSATK (110 aa). The stretch at 202–448 forms a coiled coil; that stretch reads ETMIRELENR…TGAQMTELQE (247 aa). Basic residues predominate over residues 542–551; that stretch reads SKRGIRSSFR. The interval 542–570 is disordered; sequence SKRGIRSSFRKKTDSITTQPREKEPLMQL. The segment covering 561–570 has biased composition (basic and acidic residues); that stretch reads PREKEPLMQL.

This sequence belongs to the PLEKHD1 family.

The protein is Pleckstrin homology domain-containing family D member 1 of Caenorhabditis elegans.